The chain runs to 1347 residues: MSHLLFAYYLCNDIRSFQNLLKQDDSKVKEPRKGFSEKSGQKLRINQKDRYGRTVLHIAVSENKNSFVRSLLQHKGIDVFVQDEESGYTALHRAIYVGNLEAASLLLSKDPSFRSLRIKDKEGLSPFQFLSRVLSSTIHPVLDLPIIGNELYGFGTNVNNTLGIANGKEPSSPERVFLLKNQTESPTSGQLFSRDKILDVQASKFHSVVLTDEPSQNVYVCGIGAGGRIGFNTDVQYNFIPIPGIIHKVIQISVSHTHSLALTKFGSIYSWGKNGSGELGLSNDELKKDDPIQITPRRISAFKDYQIIGMAAGKSYSVAWTDTDIYSWGLNNGQLGISDHISVVSTPRRVAGLLSPVIHAVCTTRATICLLQNNSIIAFCNYNQVKLPFNVDFGSSLKVTKHPLSLTRFNVRKLLASENKLAVLTELGEVYEFDMKLLLDRDSTSSKNSTRTSFKFTPLWIFESSDLAALDIAWTADNSLILCTRNGTCWKRELRSKKREKSSSSPYSRGPYKYNRIENLQMVVGVRASASGSFFAIRNDYLPPPIYKPSNMLIDLLRSLLPYDHLLHVRQPRLIPPEDEDGVPIFDEDRAASSNEMQLLFEGSIPILTSYENYKQSFSDVTIYCGTSMFHSHKFILCARSSFLRKLLLQKKKSSVSNIIYIEEITQSHSTIRVEDIPPLAVAILLHYLYTDTLLSPWHLDSRFSPLKENLSKLANLLELPHLAEVLPFSVSRQPLLSLTNDILQLYNNFYVLCEETMDTVIKLKDGELKAHGLFLSLRSEYFSSYFQFVSMESNSFDIPITVNLSHLTVEHMSIVLRHVYSDLKVELFDDLKESDFHNWLETMFEILSIADELLFLELKSIAQQSLLRFLNLKTLPTLMDLSLSYHAEELYSRCIDYACHNIEFFLEANRISEWDGFHLKKVAQRLTELLSDQRVHLPSSKIANRLLIRDPVLMEKRNYELKVLREYLFSQESSQLWDDSPYRSIFEDRRCSTSAVILESGIVPSSNQSDSLNKEDAEEKSPKPNVVNVTSITKTAGASVEIQNNIESASSGGDKTQLNGPGADQPVTATITFDKTSPWRNRENLSHNNNTTRASLRELLEQEKADASTTTVLSDSRFMKAPTKKSQREKKKELSKQVPISKTNVGHIDIELGKSNHSNPWSVATHQRGSFSSSTGVKKSFNGILREAAREEGSSQVIYQESKKRISNGSPTSWNLLTKPSPRSASLPKNSQPLSISEIMTEQKEEIESQKRRSSFRKTIEEIQQEEEFQKWWEEESLRVQKELGILKTERDTSTNRKQGQASKQPQRRHRKEKDSKVSESTAEFKSLPIDIPRTTHKKGKARAVK.

ANK repeat units follow at residues 51-81 and 86-115; these read YGRTVLHIAVSENKNSFVRSLLQHKGIDVFV and SGYTALHRAIYVGNLEAASLLLSKDPSFRS. 4 RCC1 repeats span residues 148 to 198, 215 to 264, 265 to 322, and 324 to 372; these read GNEL…DKIL, SQNV…ALTK, FGSI…AWTD, and DIYS…CLLQ. BTB domains lie at 619-698 and 758-829; these read SDVT…LSPW and MDTV…VELF. Disordered regions lie at residues 1006–1029, 1104–1139, 1193–1237, and 1286–1347; these read SSNQSDSLNKEDAEEKSPKPNVVN, EKADASTTTVLSDSRFMKAPTKKSQREKKKELSKQV, EGSS…PLSI, and GILK…RAVK. A compositionally biased stretch (basic and acidic residues) spans 1013 to 1023; the sequence is LNKEDAEEKSP. Polar residues-rich tracts occupy residues 1208–1237 and 1297–1306; these read SNGSPTSWNLLTKPSPRSASLPKNSQPLSI and NRKQGQASKQ. Residues 1336–1347 are compositionally biased toward basic residues; the sequence is TTHKKGKARAVK.

In terms of assembly, interacts with cul3.

It participates in protein modification; protein ubiquitination. In terms of biological role, probable substrate-specific adapter of an E3 ubiquitin-protein ligase complex which mediates the ubiquitination and subsequent proteasomal degradation of target proteins. The protein is BTB/POZ domain-containing protein 1 (btb1) of Schizosaccharomyces pombe (strain 972 / ATCC 24843) (Fission yeast).